The primary structure comprises 29 residues: Cycloviolacin-O21 (29 aa).

A cross-link (cyclopeptide (Gly-Asn)) is located at residues 1 to 29 (GLPVCGETCVTGSCYTPGCTCSWPVCTRN). Disulfide bonds link C5–C19, C9–C21, and C14–C26.

In terms of processing, this is a cyclic peptide. Expressed in leaves, petals, petioles, and runners but not in roots (at protein level).

In terms of biological role, probably participates in a plant defense mechanism. This chain is Cycloviolacin-O21, found in Viola odorata (Sweet violet).